The chain runs to 339 residues: Ferredoxin--NADP reductase (339 aa).

FAD-binding residues include Glu-35, Gln-43, Tyr-48, Val-88, Phe-122, Asp-287, and Ser-327.

This sequence belongs to the ferredoxin--NADP reductase type 2 family. As to quaternary structure, homodimer. It depends on FAD as a cofactor.

The enzyme catalyses 2 reduced [2Fe-2S]-[ferredoxin] + NADP(+) + H(+) = 2 oxidized [2Fe-2S]-[ferredoxin] + NADPH. The chain is Ferredoxin--NADP reductase from Leuconostoc citreum (strain KM20).